A 226-amino-acid chain; its full sequence is ATP synthase subunit a (226 aa).

5 helical membrane-spanning segments follow: residues 17–37 (FNYLFHLILVAIIVLIVAKLA), 79–99 (LVATIGLIVLTSNVIGIIPGF), 105–125 (SLNLTLCLALSVFLYYNFEGI), 168–188 (FGNIKGDDLFLMVVLSLAPWV), and 200–222 (MALLQTFIFMILTYVYLAGAVVV).

Belongs to the ATPase A chain family. In terms of assembly, F-type ATPases have 2 components, CF(1) - the catalytic core - and CF(0) - the membrane proton channel. CF(1) has five subunits: alpha(3), beta(3), gamma(1), delta(1), epsilon(1). CF(0) has three main subunits: a(1), b(2) and c(9-12). The alpha and beta chains form an alternating ring which encloses part of the gamma chain. CF(1) is attached to CF(0) by a central stalk formed by the gamma and epsilon chains, while a peripheral stalk is formed by the delta and b chains.

It is found in the cell inner membrane. In terms of biological role, key component of the proton channel; it plays a direct role in the translocation of protons across the membrane. The protein is ATP synthase subunit a of Campylobacter fetus subsp. fetus (strain 82-40).